Here is a 741-residue protein sequence, read N- to C-terminus: Photosystem I P700 chlorophyll a apoprotein A2 1 (741 aa).

8 consecutive transmembrane segments (helical) span residues 46–69, 135–158, 175–199, 273–291, 334–357, 373–399, 421–443, and 524–542; these read IFATHFGHLAIIFLWASSLLFHVA, LYTGSVFLLLFASLFLFAGWLHLQ, LNHHLAGLFGVSSLAWAGHLIHVAI, MAHHHLAIAVLFIVAGHMY, LHFQLGWHLACLGVVTSWVAQHMY, AALYTHHQYIAIFLMVGAFAHGAIFLV, AIISHLSWVSLFLGFHTLGLYVH, and FLVHHAIALGLHTTTLILV. The [4Fe-4S] cluster site is built by C566 and C575. The next 2 membrane-spanning stretches (helical) occupy residues 582 to 603 and 650 to 672; these read SFYLSLFWALNTVGWVTFYWHW and LSVWAWMFLFGHLVWATGFMFLI. Chlorophyll a contacts are provided by H661, M669, and Y677. W678 lines the phylloquinone pocket. The chain crosses the membrane as a helical span at residues 714–734; that stretch reads VVGLAHFTVGYVLTYAAFLIA.

This sequence belongs to the PsaA/PsaB family. As to quaternary structure, the PsaA/B heterodimer binds the P700 chlorophyll special pair and subsequent electron acceptors. PSI consists of a core antenna complex that captures photons, and an electron transfer chain that converts photonic excitation into a charge separation. The cyanobacterial PSI reaction center is composed of one copy each of PsaA,B,C,D,E,F,I,J,K,L,M and X, and forms trimeric complexes. PSI electron transfer chain: 5 chlorophyll a, 1 chlorophyll a', 2 phylloquinones and 3 4Fe-4S clusters. PSI core antenna: 90 chlorophyll a, 22 carotenoids, 3 phospholipids and 1 galactolipid. P700 is a chlorophyll a/chlorophyll a' dimer, A0 is one or more chlorophyll a, A1 is one or both phylloquinones and FX is a shared 4Fe-4S iron-sulfur center. serves as cofactor.

The protein localises to the cellular thylakoid membrane. It carries out the reaction reduced [plastocyanin] + hnu + oxidized [2Fe-2S]-[ferredoxin] = oxidized [plastocyanin] + reduced [2Fe-2S]-[ferredoxin]. Its function is as follows. PsaA and PsaB bind P700, the primary electron donor of photosystem I (PSI), as well as the electron acceptors A0, A1 and FX. PSI is a plastocyanin/cytochrome c6-ferredoxin oxidoreductase, converting photonic excitation into a charge separation, which transfers an electron from the donor P700 chlorophyll pair to the spectroscopically characterized acceptors A0, A1, FX, FA and FB in turn. Oxidized P700 is reduced on the lumenal side of the thylakoid membrane by plastocyanin or cytochrome c6. The sequence is that of Photosystem I P700 chlorophyll a apoprotein A2 1 (psaB1) from Nostoc sp. (strain PCC 7120 / SAG 25.82 / UTEX 2576).